A 305-amino-acid polypeptide reads, in one-letter code: N-acetylneuraminate lyase A (305 aa).

Aceneuramate contacts are provided by threonine 51 and threonine 52. The active-site Proton donor is the tyrosine 143. Lysine 173 (schiff-base intermediate with substrate) is an active-site residue. Aceneuramate is bound by residues serine 175, glycine 197, aspartate 199, glutamate 200, and serine 216.

The protein belongs to the DapA family. NanA subfamily. Homotetramer.

It is found in the cytoplasm. It carries out the reaction aceneuramate = aldehydo-N-acetyl-D-mannosamine + pyruvate. Its pathway is amino-sugar metabolism; N-acetylneuraminate degradation. In terms of biological role, catalyzes the cleavage of N-acetylneuraminic acid (sialic acid) to form pyruvate and N-acetylmannosamine via a Schiff base intermediate. It prevents sialic acids from being recycled and returning to the cell surface. Involved in the N-glycolylneuraminic acid (Neu5Gc) degradation pathway. The protein is N-acetylneuraminate lyase A (npl-a) of Xenopus laevis (African clawed frog).